We begin with the raw amino-acid sequence, 322 residues long: Porphobilinogen deaminase (322 aa).

The residue at position 252 (cysteine 252) is an S-(dipyrrolylmethanemethyl)cysteine.

This sequence belongs to the HMBS family. As to quaternary structure, monomer. Dipyrromethane is required as a cofactor.

It carries out the reaction 4 porphobilinogen + H2O = hydroxymethylbilane + 4 NH4(+). Its pathway is porphyrin-containing compound metabolism; protoporphyrin-IX biosynthesis; coproporphyrinogen-III from 5-aminolevulinate: step 2/4. In terms of biological role, tetrapolymerization of the monopyrrole PBG into the hydroxymethylbilane pre-uroporphyrinogen in several discrete steps. In Caulobacter vibrioides (strain ATCC 19089 / CIP 103742 / CB 15) (Caulobacter crescentus), this protein is Porphobilinogen deaminase.